Reading from the N-terminus, the 248-residue chain is Methionine aminopeptidase (248 aa).

Residue H77 coordinates substrate. A divalent metal cation-binding residues include D94, D105, and H169. H176 serves as a coordination point for substrate. Residues E202 and E233 each coordinate a divalent metal cation.

This sequence belongs to the peptidase M24A family. Methionine aminopeptidase type 1 subfamily. Monomer. The cofactor is Co(2+). Requires Zn(2+) as cofactor. Mn(2+) serves as cofactor. Fe(2+) is required as a cofactor.

The enzyme catalyses Release of N-terminal amino acids, preferentially methionine, from peptides and arylamides.. Functionally, removes the N-terminal methionine from nascent proteins. The N-terminal methionine is often cleaved when the second residue in the primary sequence is small and uncharged (Met-Ala-, Cys, Gly, Pro, Ser, Thr, or Val). Requires deformylation of the N(alpha)-formylated initiator methionine before it can be hydrolyzed. This is Methionine aminopeptidase from Mycoplasma genitalium (strain ATCC 33530 / DSM 19775 / NCTC 10195 / G37) (Mycoplasmoides genitalium).